Here is a 153-residue protein sequence, read N- to C-terminus: Ribosome maturation factor RimP (153 aa).

It belongs to the RimP family.

The protein resides in the cytoplasm. In terms of biological role, required for maturation of 30S ribosomal subunits. The polypeptide is Ribosome maturation factor RimP (Clostridium botulinum (strain ATCC 19397 / Type A)).